A 381-amino-acid chain; its full sequence is Translation initiation factor eIF2B subunit beta (381 aa).

Residues 125–148 (LQKPEQPHQNRKNSSGSSSMKTKT) are disordered. The span at 136-145 (KNSSGSSSMK) shows a compositional bias: polar residues.

It belongs to the eIF-2B alpha/beta/delta subunits family. In terms of assembly, component of the translation initiation factor 2B (eIF2B) complex which is a heterodecamer of two sets of five different subunits: alpha, beta, gamma, delta and epsilon. Subunits alpha, beta and delta comprise a regulatory subcomplex and subunits epsilon and gamma comprise a catalytic subcomplex. Within the complex, the hexameric regulatory complex resides at the center, with the two heterodimeric catalytic subcomplexes bound on opposite sides.

The protein localises to the cytoplasm. Its subcellular location is the cytosol. Acts as a component of the translation initiation factor 2B (eIF2B) complex, which catalyzes the exchange of GDP for GTP on the eukaryotic initiation factor 2 (eIF2) complex gamma subunit. Its guanine nucleotide exchange factor activity is repressed when bound to eIF2 complex phosphorylated on the alpha subunit, thereby limiting the amount of methionyl-initiator methionine tRNA available to the ribosome and consequently global translation is repressed. It activates the synthesis of GCN4 in yeast under amino acid starvation conditions by suppressing the inhibitory effects of multiple AUG codons present in the leader of GCN4 mRNA. It may promote either repression or activation of GCN4 expression depending on amino acid availability. GCD6 and GCD7 repress GCN4 expression at the translational level by ensuring that ribosomes which have translated UORF1 will reinitiate at UORF2, -3, or -4 and thus fail to reach the GCN4 start site. In Saccharomyces cerevisiae (strain ATCC 204508 / S288c) (Baker's yeast), this protein is Translation initiation factor eIF2B subunit beta (GCD7).